A 177-amino-acid polypeptide reads, in one-letter code: Protein C (177 aa).

Residues 1 to 10 (MSTKAWNASR) are compositionally biased toward polar residues. The segment at 1–37 (MSTKAWNASRLSGPDPSTPWSLKKPLQHGSRPPKGKR) is disordered.

It belongs to the morbillivirus protein C family.

This chain is Protein C (P/V/C), found in Bos indicus (Zebu).